Here is a 370-residue protein sequence, read N- to C-terminus: Accessory Sec system protein translocase subunit SecY2 (370 aa).

The next 9 membrane-spanning stretches (helical) occupy residues Ile-17 to Thr-37, Val-65 to Tyr-85, Ile-105 to His-125, Trp-134 to Asn-154, Met-155 to Met-175, Leu-188 to Ile-208, Ile-240 to Val-260, Phe-276 to Ile-296, and Trp-339 to Ile-359.

The protein belongs to the SecY/SEC61-alpha family. SecY2 subfamily. As to quaternary structure, component of the accessory SecA2/SecY2 protein translocase complex required to export cell wall proteins. May form heterotrimers with SecE and SecG subunits.

It localises to the cell membrane. Functionally, part of the accessory SecA2/SecY2 system specifically required for export of possible cell wall proteins. The central subunit of a protein translocation channel. In Staphylococcus carnosus (strain TM300), this protein is Accessory Sec system protein translocase subunit SecY2.